Consider the following 223-residue polypeptide: Phosphoenolpyruvate guanylyltransferase (223 aa).

Residues T140, G156, and S159 each coordinate phosphoenolpyruvate.

It belongs to the CofC family.

The enzyme catalyses phosphoenolpyruvate + GTP + H(+) = enolpyruvoyl-2-diphospho-5'-guanosine + diphosphate. The protein operates within cofactor biosynthesis; coenzyme F420 biosynthesis. Functionally, guanylyltransferase that catalyzes the activation of phosphoenolpyruvate (PEP) as enolpyruvoyl-2-diphospho-5'-guanosine, via the condensation of PEP with GTP. It is involved in the biosynthesis of coenzyme F420, a hydride carrier cofactor. The protein is Phosphoenolpyruvate guanylyltransferase of Conexibacter woesei (strain DSM 14684 / CCUG 47730 / CIP 108061 / JCM 11494 / NBRC 100937 / ID131577).